A 97-amino-acid chain; its full sequence is Protein Vpr (97 aa).

The homooligomerization stretch occupies residues 1–42; it reads MEQAPENQGPAKEPFNEWALELLEELKAEAVRHFPRPWLHAL. S79, S95, and S97 each carry phosphoserine; by host.

Belongs to the HIV-1 VPR protein family. As to quaternary structure, homooligomer, may form homodimer. Interacts with p6-gag region of the Pr55 Gag precursor protein through a (Leu-X-X)4 motif near the C-terminus of the P6gag protein. Interacts with host UNG. May interact with host RAD23A/HHR23A. Interacts with host VPRBP/DCAF1, leading to hijack the CUL4A-RBX1-DDB1-DCAF1/VPRBP complex, mediating ubiquitination of host proteins such as TERT and ZGPAT and arrest of the cell cycle in G2 phase. Phosphorylated on several residues by host. These phosphorylations regulate VPR activity for the nuclear import of the HIV-1 pre-integration complex.

Its subcellular location is the virion. It is found in the host nucleus. It localises to the host extracellular space. In terms of biological role, during virus replication, may deplete host UNG protein, and incude G2-M cell cycle arrest. Acts by targeting specific host proteins for degradation by the 26S proteasome, through association with the cellular CUL4A-DDB1 E3 ligase complex by direct interaction with host VPRPB/DCAF-1. Cell cycle arrest reportedly occurs within hours of infection and is not blocked by antiviral agents, suggesting that it is initiated by the VPR carried into the virion. Additionally, VPR induces apoptosis in a cell cycle dependent manner suggesting that these two effects are mechanistically linked. Detected in the serum and cerebrospinal fluid of AIDS patient, VPR may also induce cell death to bystander cells. During virus entry, plays a role in the transport of the viral pre-integration (PIC) complex to the host nucleus. This function is crucial for viral infection of non-dividing macrophages. May act directly at the nuclear pore complex, by binding nucleoporins phenylalanine-glycine (FG)-repeat regions. The sequence is that of Protein Vpr from Human immunodeficiency virus type 1 group O (isolate ANT70) (HIV-1).